A 100-amino-acid chain; its full sequence is NADH-quinone oxidoreductase subunit K 2 (100 aa).

The next 3 helical transmembrane spans lie at 4–24 (LWWYIVLGVVLFVIGAAGVLI), 28–48 (ILVVLMSLELLLNSVNINFIA), and 60–80 (IFAIFVIAITAAEVAVALGIL).

The protein belongs to the complex I subunit 4L family. In terms of assembly, NDH-1 is composed of 14 different subunits. Subunits NuoA, H, J, K, L, M, N constitute the membrane sector of the complex.

The protein localises to the cell inner membrane. It catalyses the reaction a quinone + NADH + 5 H(+)(in) = a quinol + NAD(+) + 4 H(+)(out). NDH-1 shuttles electrons from NADH, via FMN and iron-sulfur (Fe-S) centers, to quinones in the respiratory chain. The immediate electron acceptor for the enzyme in this species is believed to be ubiquinone. Couples the redox reaction to proton translocation (for every two electrons transferred, four hydrogen ions are translocated across the cytoplasmic membrane), and thus conserves the redox energy in a proton gradient. This Rhizobium etli (strain ATCC 51251 / DSM 11541 / JCM 21823 / NBRC 15573 / CFN 42) protein is NADH-quinone oxidoreductase subunit K 2.